A 1023-amino-acid polypeptide reads, in one-letter code: Sodium/potassium-transporting ATPase subunit alpha-1 (1023 aa).

Residues 1 to 5 (MGKGV) constitute a propeptide that is removed on maturation. Basic and acidic residues predominate over residues 1-11 (MGKGVGRDKYE). A disordered region spans residues 1–39 (MGKGVGRDKYEPAAVSEHGDKKGKKAKKERDMDELKKEV). Residues 6-96 (GRDKYEPAAV…PEWVKFCRQL (91 aa)) lie on the Cytoplasmic side of the membrane. K9 is modified (N6-acetyllysine). Phosphotyrosine is present on Y10. S16 carries the post-translational modification Phosphoserine. K21 is subject to N6-acetyllysine. Positions 28-39 (KERDMDELKKEV) are enriched in basic and acidic residues. S40 and S47 each carry phosphoserine. A phosphoinositide-3 kinase binding region spans residues 82–84 (PPP). Residues 97–117 (FGGFSMLLWIGAILCFLAYGI) traverse the membrane as a helical segment. Over 118–129 (RSATEEEPPNDD) the chain is Extracellular. Residues 130-150 (LYLGVVLSAVVIITGCFSYYQ) form a helical membrane-spanning segment. Topologically, residues 151–291 (EAKSSKIMES…TPIAEEIEHF (141 aa)) are cytoplasmic. The disordered stretch occupies residues 216–235 (SSLTGESEPQTRSPDFTNEN). S228 is subject to Phosphoserine. The residue at position 260 (Y260) is a Phosphotyrosine. Residues 292 to 312 (IHLITGVAVFLGVSFFILSLI) traverse the membrane as a helical segment. The Extracellular segment spans residues 313 to 319 (LEYTWLE). The chain crosses the membrane as a helical span at residues 320–340 (AVIFLIGIIVANVPEGLLATV). Residues 341 to 775 (TVCLTLTAKR…RLIFDNLKKS (435 aa)) are Cytoplasmic-facing. Catalysis depends on D376, which acts as the 4-aspartylphosphate intermediate. Residues S452 and S484 each carry the phosphoserine modification. Residue K487 coordinates ATP. Y542 carries the post-translational modification Phosphotyrosine. The tract at residues 596-717 (RAAVPDAVGK…QGAIVAVTGD (122 aa)) is mediates interaction with SCN7A. K661 carries the post-translational modification N6-succinyllysine. Residues S668 and S675 each carry the phosphoserine modification. Mg(2+) contacts are provided by D717 and D721. The helical transmembrane segment at 776–798 (IAYTLTSNIPEITPFLIFIIANI) threads the bilayer. The Extracellular segment spans residues 799–801 (PLP). Residues 802-824 (LGTVTILCIDLGTDMVPAISLAY) form a helical membrane-spanning segment. At 825–849 (EQAESDIMKRQPRNPKTDKLVNERL) the chain is on the cytoplasmic side. Residues 850 to 872 (ISMAYGQIGMIQALGGFFTYFVI) traverse the membrane as a helical segment. Topologically, residues 873-915 (LAENGFLPFHLLGIRETWDDRWVNDVEDSYGQQWTYEQRKIVE) are extracellular. A helical transmembrane segment spans residues 916–936 (FTCHTAFFVSIVVVQWADLVI). At 937 to 952 (CKTRRNSVFQQGMKNK) the chain is on the cytoplasmic side. S943 bears the Phosphoserine; by PKA mark. The helical transmembrane segment at 953-973 (ILIFGLFEETALAAFLSYCPG) threads the bilayer. The Extracellular portion of the chain corresponds to 974–979 (MGAALR). The chain crosses the membrane as a helical span at residues 980-1000 (MYPLKPTWWFCAFPYSLLIFV). Over 1001–1023 (YDEVRKLIIRRRPGGWVEKETYY) the chain is Cytoplasmic.

The protein belongs to the cation transport ATPase (P-type) (TC 3.A.3) family. Type IIC subfamily. In terms of assembly, the sodium/potassium-transporting ATPase is composed of a catalytic alpha subunit, an auxiliary non-catalytic beta subunit and an additional regulatory subunit. Interacts with regulatory subunit FXYD1. Interacts with regulatory subunit FXYD3. Interacts with SIK1. Interacts with SLC35G1 and STIM1. Interacts with CLN3; this interaction regulates the sodium/potassium-transporting ATPase complex localization at the plasma membrane. Interacts with SCN7A; activates ATP1A1 P-type sodium:potassium-exchanging transporter activity which indirectly signals to nearby neurons to regulate sodium homeostasis. Phosphorylation on Tyr-10 modulates pumping activity. Phosphorylation of Ser-943 by PKA modulates the response of ATP1A1 to PKC. Dephosphorylation by protein phosphatase 2A (PP2A) following increases in intracellular sodium, leading to increase catalytic activity.

Its subcellular location is the cell membrane. The protein localises to the basolateral cell membrane. It is found in the sarcolemma. The protein resides in the cell projection. It localises to the axon. Its subcellular location is the melanosome. It catalyses the reaction K(+)(out) + Na(+)(in) + ATP + H2O = K(+)(in) + Na(+)(out) + ADP + phosphate + H(+). Its function is as follows. This is the catalytic component of the active enzyme, which catalyzes the hydrolysis of ATP coupled with the exchange of sodium and potassium ions across the plasma membrane. This action creates the electrochemical gradient of sodium and potassium ions, providing the energy for active transport of various nutrients. Could also be part of an osmosensory signaling pathway that senses body-fluid sodium levels and controls salt intake behavior as well as voluntary water intake to regulate sodium homeostasis. This Mus musculus (Mouse) protein is Sodium/potassium-transporting ATPase subunit alpha-1 (Atp1a1).